A 58-amino-acid chain; its full sequence is Ribulose bisphosphate carboxylase large chain (58 aa).

The propeptide occupies 1–2 (MS). P3 carries the post-translational modification N-acetylproline. K14 is subject to N6,N6,N6-trimethyllysine.

It belongs to the RuBisCO large chain family. Type I subfamily. In terms of assembly, heterohexadecamer of 8 large chains and 8 small chains.

It is found in the plastid. The protein resides in the chloroplast. It carries out the reaction 2 (2R)-3-phosphoglycerate + 2 H(+) = D-ribulose 1,5-bisphosphate + CO2 + H2O. The catalysed reaction is D-ribulose 1,5-bisphosphate + O2 = 2-phosphoglycolate + (2R)-3-phosphoglycerate + 2 H(+). In terms of biological role, ruBisCO catalyzes two reactions: the carboxylation of D-ribulose 1,5-bisphosphate, the primary event in carbon dioxide fixation, as well as the oxidative fragmentation of the pentose substrate in the photorespiration process. Both reactions occur simultaneously and in competition at the same active site. In Rosa damascena (Damask rose), this protein is Ribulose bisphosphate carboxylase large chain (rbcL).